Consider the following 169-residue polypeptide: Holo-[acyl-carrier-protein] synthase (169 aa).

Mg(2+)-binding residues include Asp-8 and Glu-50.

Belongs to the P-Pant transferase superfamily. AcpS family. Mg(2+) serves as cofactor.

The protein localises to the cytoplasm. The enzyme catalyses apo-[ACP] + CoA = holo-[ACP] + adenosine 3',5'-bisphosphate + H(+). Transfers the 4'-phosphopantetheine moiety from coenzyme A to a Ser of acyl-carrier-protein. The sequence is that of Holo-[acyl-carrier-protein] synthase from Thermotoga maritima (strain ATCC 43589 / DSM 3109 / JCM 10099 / NBRC 100826 / MSB8).